The primary structure comprises 226 residues: Ribonuclease 3 (226 aa).

The region spanning 6–128 (ANKIQQILGY…LIGSIYLDSN (123 aa)) is the RNase III domain. Glu-41 contributes to the Mg(2+) binding site. The active site involves Asp-45. Positions 114 and 117 each coordinate Mg(2+). Residue Glu-117 is part of the active site. One can recognise a DRBM domain in the interval 155–225 (DPKTRLQEYL…ARKALIKLGV (71 aa)).

This sequence belongs to the ribonuclease III family. In terms of assembly, homodimer. Mg(2+) serves as cofactor.

It is found in the cytoplasm. It carries out the reaction Endonucleolytic cleavage to 5'-phosphomonoester.. In terms of biological role, digests double-stranded RNA. Involved in the processing of primary rRNA transcript to yield the immediate precursors to the large and small rRNAs (23S and 16S). Processes some mRNAs, and tRNAs when they are encoded in the rRNA operon. Processes pre-crRNA and tracrRNA of type II CRISPR loci if present in the organism. This chain is Ribonuclease 3, found in Buchnera aphidicola subsp. Schizaphis graminum (strain Sg).